A 152-amino-acid chain; its full sequence is ADP-ribose glycohydrolase OARD1 (152 aa).

An N-acetylalanine modification is found at A2. The Macro domain occupies A2–L152. S4 bears the Phosphoserine mark. Residue L21 participates in substrate binding. K84 acts as the Nucleophile in catalysis. Substrate is bound by residues R119–D125 and L152. Residue D125 is the Proton acceptor of the active site.

In terms of tissue distribution, ubiquitous.

The protein resides in the nucleus. It localises to the nucleoplasm. Its subcellular location is the nucleolus. It is found in the chromosome. The catalysed reaction is 2''-O-acetyl-ADP-D-ribose + H2O = ADP-D-ribose + acetate + H(+). It catalyses the reaction 5-O-(ADP-D-ribosyl)-L-glutamyl-[protein] + H2O = L-glutamyl-[protein] + ADP-D-ribose + H(+). It carries out the reaction alpha-NAD(+) + H2O = ADP-D-ribose + nicotinamide + H(+). Its activity is regulated as follows. Subject to competitive inhibition by the product ADP-ribose. Functionally, ADP-ribose glycohydrolase that hydrolyzes ADP-ribose and acts on different substrates, such as proteins ADP-ribosylated on glutamate and O-acetyl-ADP-D-ribose. Specifically acts as a glutamate mono-ADP-ribosylhydrolase by mediating the removal of mono-ADP-ribose attached to glutamate residues on proteins. Does not act on poly-ADP-ribosylated proteins: the poly-ADP-ribose chain of poly-ADP-ribosylated glutamate residues must by hydrolyzed into mono-ADP-ribosylated glutamate by PARG to become a substrate for OARD1. Deacetylates O-acetyl-ADP ribose, a signaling molecule generated by the deacetylation of acetylated lysine residues in histones and other proteins. Catalyzes the deacylation of O-acetyl-ADP-ribose, O-propionyl-ADP-ribose and O-butyryl-ADP-ribose, yielding ADP-ribose plus acetate, propionate and butyrate, respectively. This chain is ADP-ribose glycohydrolase OARD1, found in Homo sapiens (Human).